Here is a 385-residue protein sequence, read N- to C-terminus: Queuine tRNA-ribosyltransferase (385 aa).

Asp92 functions as the Proton acceptor in the catalytic mechanism. Residues 92–96, Asp146, Gln188, and Gly215 each bind substrate; that span reads DSGGF. The segment at 246–252 is RNA binding; that stretch reads GVGHPED. Asp265 functions as the Nucleophile in the catalytic mechanism. Positions 270-274 are RNA binding; important for wobble base 34 recognition; sequence TRTGR. 4 residues coordinate Zn(2+): Cys303, Cys305, Cys308, and His334.

Belongs to the queuine tRNA-ribosyltransferase family. As to quaternary structure, homodimer. Within each dimer, one monomer is responsible for RNA recognition and catalysis, while the other monomer binds to the replacement base PreQ1. Zn(2+) serves as cofactor.

It catalyses the reaction 7-aminomethyl-7-carbaguanine + guanosine(34) in tRNA = 7-aminomethyl-7-carbaguanosine(34) in tRNA + guanine. The protein operates within tRNA modification; tRNA-queuosine biosynthesis. Functionally, catalyzes the base-exchange of a guanine (G) residue with the queuine precursor 7-aminomethyl-7-deazaguanine (PreQ1) at position 34 (anticodon wobble position) in tRNAs with GU(N) anticodons (tRNA-Asp, -Asn, -His and -Tyr). Catalysis occurs through a double-displacement mechanism. The nucleophile active site attacks the C1' of nucleotide 34 to detach the guanine base from the RNA, forming a covalent enzyme-RNA intermediate. The proton acceptor active site deprotonates the incoming PreQ1, allowing a nucleophilic attack on the C1' of the ribose to form the product. After dissociation, two additional enzymatic reactions on the tRNA convert PreQ1 to queuine (Q), resulting in the hypermodified nucleoside queuosine (7-(((4,5-cis-dihydroxy-2-cyclopenten-1-yl)amino)methyl)-7-deazaguanosine). The chain is Queuine tRNA-ribosyltransferase from Thermus thermophilus (strain ATCC 27634 / DSM 579 / HB8).